The chain runs to 198 residues: MTYFLGLTGGIASGKSTADEFFKKKKIPIIDSDLIAHQIMEIGQNGYKAVVDYFGTDILNDDQTINRRKLGGIVFNDKAKLKKLNELTHPLVHQEIKQQMARYRANQEKLVVIDVPLLFESGFESLCNGVLAISITPELQIERLMKRNAFTKKEAVARISNQMPLSEKEKRATYVVANTGTIGDLEKKLSDLLQEIGR.

A DPCK domain is found at 4–198 (FLGLTGGIAS…LSDLLQEIGR (195 aa)). An ATP-binding site is contributed by 12–17 (ASGKST).

It belongs to the CoaE family.

The protein localises to the cytoplasm. The catalysed reaction is 3'-dephospho-CoA + ATP = ADP + CoA + H(+). Its pathway is cofactor biosynthesis; coenzyme A biosynthesis; CoA from (R)-pantothenate: step 5/5. Catalyzes the phosphorylation of the 3'-hydroxyl group of dephosphocoenzyme A to form coenzyme A. This Lactobacillus johnsonii (strain CNCM I-12250 / La1 / NCC 533) protein is Dephospho-CoA kinase.